A 179-amino-acid polypeptide reads, in one-letter code: Methylated-DNA--protein-cysteine methyltransferase, inducible (179 aa).

Catalysis depends on Cys-141, which acts as the Nucleophile; methyl group acceptor.

Belongs to the MGMT family.

The catalysed reaction is a 6-O-methyl-2'-deoxyguanosine in DNA + L-cysteinyl-[protein] = S-methyl-L-cysteinyl-[protein] + a 2'-deoxyguanosine in DNA. The enzyme catalyses a 4-O-methyl-thymidine in DNA + L-cysteinyl-[protein] = a thymidine in DNA + S-methyl-L-cysteinyl-[protein]. Involved in the cellular defense against the biological effects of O6-methylguanine (O6-MeG) and O4-methylthymine (O4-MeT) in DNA. Repairs the methylated nucleobase in DNA by stoichiometrically transferring the methyl group to a cysteine residue in the enzyme. This is a suicide reaction: the enzyme is irreversibly inactivated. The chain is Methylated-DNA--protein-cysteine methyltransferase, inducible (adaB) from Bacillus subtilis (strain 168).